We begin with the raw amino-acid sequence, 122 residues long: Small ribosomal subunit protein uS13 (122 aa).

The tract at residues 95-122 (GLPVHGQRTHTNARTRKGPRRGAVGKKK) is disordered.

The protein belongs to the universal ribosomal protein uS13 family. Part of the 30S ribosomal subunit. Forms a loose heterodimer with protein S19. Forms two bridges to the 50S subunit in the 70S ribosome.

Its function is as follows. Located at the top of the head of the 30S subunit, it contacts several helices of the 16S rRNA. In the 70S ribosome it contacts the 23S rRNA (bridge B1a) and protein L5 of the 50S subunit (bridge B1b), connecting the 2 subunits; these bridges are implicated in subunit movement. Contacts the tRNAs in the A and P-sites. This Nitratidesulfovibrio vulgaris (strain DSM 19637 / Miyazaki F) (Desulfovibrio vulgaris) protein is Small ribosomal subunit protein uS13.